A 429-amino-acid chain; its full sequence is Nocturnin (429 aa).

Residues 1 to 73 constitute a mitochondrion transit peptide; it reads MYQSPRRLCS…SMGNGTSRLY (73 aa). The segment at 21–68 is disordered; it reads RRTLVPGPRRTLAPPVLGSRPKSPQLQAAAASGAARSRPRTVSSMGNG. Glutamate 193 provides a ligand contact to Mg(2+). Residues glutamate 193, 217 to 219, asparagine 261, 284 to 287, and 322 to 324 contribute to the substrate site; these read KPW, HLKA, and DFN. The interval 341-351 is interaction with PPARG; that stretch reads NLNSAYKLLSP. Residue histidine 412 coordinates substrate.

It belongs to the CCR4/nocturin family. As to quaternary structure, interacts with PPARG. It depends on Mg(2+) as a cofactor. Highly expressed in the differentiated adipocyte (at protein level). Ubiquitous.

The protein resides in the cytoplasm. It is found in the nucleus. Its subcellular location is the perinuclear region. The protein localises to the mitochondrion. It carries out the reaction NADP(+) + H2O = phosphate + NAD(+). The catalysed reaction is NADPH + H2O = phosphate + NADH. Phosphatase which catalyzes the conversion of NADP(+) to NAD(+) and of NADPH to NADH. Shows a small preference for NADPH over NADP(+). Represses translation and promotes degradation of target mRNA molecules. Plays an important role in post-transcriptional regulation of metabolic genes under circadian control. Exerts a rhythmic post-transcriptional control of genes necessary for metabolic functions including nutrient absorption, glucose/insulin sensitivity, lipid metabolism, adipogenesis, inflammation and osteogenesis. Plays an important role in favoring adipogenesis over osteoblastogenesis and acts as a key regulator of the adipogenesis/osteogenesis balance. Promotes adipogenesis by facilitating PPARG nuclear translocation which activates its transcriptional activity. Regulates circadian expression of NOS2 in the liver and negatively regulates the circadian expression of IGF1 in the bone. Critical for proper development of early embryos. The sequence is that of Nocturnin from Mus musculus (Mouse).